Reading from the N-terminus, the 207-residue chain is ADP-ribose pyrophosphatase (207 aa).

Substrate is bound by residues 37–38 (RE) and Arg64. The Nudix hydrolase domain occupies 41–172 (EHFGAVAIVA…EIVNSIAIAG (132 aa)). Position 76 (Ala76) interacts with Mg(2+). The Nudix box motif lies at 77–99 (GLLDVAGEPPHLTAARELREEVG). Leu78 contributes to the substrate binding site. Residues Glu93 and Glu97 each coordinate Mg(2+). Substrate-binding positions include 114 to 116 (APG) and Glu120. Glu142 is a binding site for Mg(2+). The Proton acceptor role is filled by Glu142.

This sequence belongs to the Nudix hydrolase family. Homodimer. Mg(2+) is required as a cofactor. Mn(2+) serves as cofactor.

It carries out the reaction ADP-D-ribose + H2O = D-ribose 5-phosphate + AMP + 2 H(+). The enzyme catalyses 8-oxo-dGDP + H2O = 8-oxo-dGMP + phosphate + H(+). The catalysed reaction is 8-oxo-GDP + H2O = 8-oxo-GMP + phosphate + H(+). Catalyzes the hydrolysis of ADP-ribose (ADPR) to AMP and ribose-5-phosphate. Can also hydrolyze ADP-mannose and ADP-glucose, with lower efficiency. Has weaker activity with NAD, GDP-sugars and UDP-sugars. Also catalyzes the conversion of 8-oxo-dGDP to 8-oxo-dGMP, and 8-oxo-GDP to 8-oxo-GMP. Functions in concert with MutT1 to detoxify 8-oxo-dGTP to 8-oxo-dGMP and may play an important role in supporting cellular growth under oxidative stress. The catalytic efficiency is much higher for the hydrolysis of ADPR than 8-oxo-dGTP, suggesting a more relevant biological role in hydrolysis of ADPR. The chain is ADP-ribose pyrophosphatase from Mycobacterium tuberculosis (strain ATCC 25618 / H37Rv).